Consider the following 1071-residue polypeptide: ATP-dependent helicase/deoxyribonuclease subunit B (1071 aa).

This sequence belongs to the helicase family. AddB/RexB type 2 subfamily. Heterodimer of AddA and RexB. Requires Mg(2+) as cofactor.

Its function is as follows. The heterodimer acts as both an ATP-dependent DNA helicase and an ATP-dependent, dual-direction single-stranded exonuclease. Recognizes the chi site generating a DNA molecule suitable for the initiation of homologous recombination. This subunit has 5' -&gt; 3' nuclease activity but not helicase activity. This chain is ATP-dependent helicase/deoxyribonuclease subunit B, found in Streptococcus pyogenes serotype M4 (strain MGAS10750).